The following is a 182-amino-acid chain: Adenine phosphoribosyltransferase (182 aa).

It belongs to the purine/pyrimidine phosphoribosyltransferase family. In terms of assembly, homodimer.

It localises to the cytoplasm. It catalyses the reaction AMP + diphosphate = 5-phospho-alpha-D-ribose 1-diphosphate + adenine. Its pathway is purine metabolism; AMP biosynthesis via salvage pathway; AMP from adenine: step 1/1. In terms of biological role, catalyzes a salvage reaction resulting in the formation of AMP, that is energically less costly than de novo synthesis. The protein is Adenine phosphoribosyltransferase of Stutzerimonas stutzeri (strain A1501) (Pseudomonas stutzeri).